Here is an 865-residue protein sequence, read N- to C-terminus: Fanconi-associated nuclease 1 homolog (865 aa).

The segment at 35 to 62 (GKICPLCETKFSLASYKSHMNTCNVADD) adopts a UBZ4-type zinc-finger fold. Zn(2+) contacts are provided by Cys-38, Cys-41, His-53, and Cys-57. 2 disordered regions span residues 90–140 (DASF…SLDV) and 162–187 (RRSS…PVKK). Basic and acidic residues-rich tracts occupy residues 93–112 (FSDK…REVP) and 174–187 (DQAD…PVKK). Mn(2+)-binding residues include Glu-682, Asp-810, Glu-825, and Val-826. The 114-residue stretch at 744–857 (QELIEENIRK…GIRAEVCHVA (114 aa)) folds into the VRR-NUC domain.

Belongs to the FAN1 family. Mn(2+) is required as a cofactor. It depends on Mg(2+) as a cofactor.

It localises to the nucleus. The catalysed reaction is Hydrolytically removes 5'-nucleotides successively from the 3'-hydroxy termini of 3'-hydroxy-terminated oligonucleotides.. In terms of biological role, nuclease required for the repair of DNA interstrand cross-links (ICL). Acts as a 5'-3' exonuclease that anchors at a cut end of DNA and cleaves DNA successively at every third nucleotide, allowing to excise an ICL from one strand through flanking incisions. The protein is Fanconi-associated nuclease 1 homolog (fan-1) of Caenorhabditis elegans.